Reading from the N-terminus, the 117-residue chain is Basic phospholipase A2 pseudexin A chain (117 aa).

7 cysteine pairs are disulfide-bonded: Cys-11–Cys-71, Cys-27–Cys-117, Cys-29–Cys-45, Cys-44–Cys-98, Cys-51–Cys-91, Cys-60–Cys-84, and Cys-78–Cys-89. Residues Tyr-28, Gly-30, and Gly-32 each coordinate Ca(2+). Residue His-48 is part of the active site. Asp-49 serves as a coordination point for Ca(2+). Asp-92 is a catalytic residue.

The protein belongs to the phospholipase A2 family. Group I subfamily. D49 sub-subfamily. Ca(2+) serves as cofactor. Expressed by the venom gland.

Its subcellular location is the secreted. The catalysed reaction is a 1,2-diacyl-sn-glycero-3-phosphocholine + H2O = a 1-acyl-sn-glycero-3-phosphocholine + a fatty acid + H(+). Its function is as follows. PLA2 catalyzes the calcium-dependent hydrolysis of the 2-acyl groups in 3-sn-phosphoglycerides. The chain is Basic phospholipase A2 pseudexin A chain from Pseudechis porphyriacus (Red-bellied black snake).